A 158-amino-acid polypeptide reads, in one-letter code: Cyclic pyranopterin monophosphate synthase (158 aa).

Substrate contacts are provided by residues 75–77 (LCH) and 113–114 (ME). The active site involves aspartate 128.

This sequence belongs to the MoaC family. As to quaternary structure, homohexamer; trimer of dimers.

It catalyses the reaction (8S)-3',8-cyclo-7,8-dihydroguanosine 5'-triphosphate = cyclic pyranopterin phosphate + diphosphate. Its pathway is cofactor biosynthesis; molybdopterin biosynthesis. Its function is as follows. Catalyzes the conversion of (8S)-3',8-cyclo-7,8-dihydroguanosine 5'-triphosphate to cyclic pyranopterin monophosphate (cPMP). The sequence is that of Cyclic pyranopterin monophosphate synthase from Polynucleobacter asymbioticus (strain DSM 18221 / CIP 109841 / QLW-P1DMWA-1) (Polynucleobacter necessarius subsp. asymbioticus).